The chain runs to 346 residues: Phenylalanine--tRNA ligase alpha subunit (346 aa).

Mg(2+) is bound at residue glutamate 264.

Belongs to the class-II aminoacyl-tRNA synthetase family. Phe-tRNA synthetase alpha subunit type 1 subfamily. In terms of assembly, tetramer of two alpha and two beta subunits. Requires Mg(2+) as cofactor.

It is found in the cytoplasm. The enzyme catalyses tRNA(Phe) + L-phenylalanine + ATP = L-phenylalanyl-tRNA(Phe) + AMP + diphosphate + H(+). In Leifsonia xyli subsp. xyli (strain CTCB07), this protein is Phenylalanine--tRNA ligase alpha subunit.